Here is a 391-residue protein sequence, read N- to C-terminus: MSVIKMADLDLNGKRVLIREDLNVPVKAGKVTSDARIRAALPTIKLALEKGAKVMVMSHLGRPTEGEYDEEFSLAPVVNYLNDALEQTVRLEKDYLNGVELADNEVVVFENVRFNKGEKNNDEALSKQLAALCDVYVMDAFGTAHRAQASTHGVGLFADVACAGPLLSAELEALGKALDNPARPLVAIVGGSKVSTKLTVLDSLSKIVDQLVTGGGIANTFIAAAGYPVGKSLYEADLMDEANRLCAAAVANNGEIPVPTDVVVGNEFSDSAVATLKDVSEVTSDDMIFDIGPDTANKLAKIIANAGTVVWNGPVGVFEFDQFGNGTRAIAQAIANSNAFSIAGGGDTLAAIDKYGISDKISYISTGGGAFLEFLEGKKLPAVEMLESRAK.

Substrate-binding positions include 21–23 (DLN), Arg-36, 59–62 (HLGR), Arg-113, and Arg-146. Residues Lys-197, Glu-319, and 345–348 (GGDT) each bind ATP.

The protein belongs to the phosphoglycerate kinase family. In terms of assembly, monomer.

The protein resides in the cytoplasm. The enzyme catalyses (2R)-3-phosphoglycerate + ATP = (2R)-3-phospho-glyceroyl phosphate + ADP. Its pathway is carbohydrate degradation; glycolysis; pyruvate from D-glyceraldehyde 3-phosphate: step 2/5. The sequence is that of Phosphoglycerate kinase from Pseudoalteromonas translucida (strain TAC 125).